Consider the following 443-residue polypeptide: Transmembrane protein 184C (443 aa).

7 helical membrane-spanning segments follow: residues 15–35 (LVVLLYIVGLIVGVPICIWKL), 46–66 (AWFIAGIFVLMTIPISLWGIL), 84–104 (ILWMVPIYSVDSWIALKYPDI), 182–202 (PVTTVIALICQLTGVYGEGDF), 210–230 (YLVIINNVSQVFAMYCLVLFY), 252–272 (VVFVSFWQAVFIAILVKAGVI), and 284–304 (VATGLQDFIICVEMFLAAVAH). Residues 369-378 (TSLLSSSTQD) show a composition bias toward polar residues. The disordered stretch occupies residues 369-422 (TSLLSSSTQDPISAASSIPPSPSGHYQGFGQTITPQTTPTATTMPEELYSADSP). Low complexity predominate over residues 399–411 (QTITPQTTPTATT).

This sequence belongs to the TMEM184 family.

The protein localises to the membrane. Its function is as follows. May play a role in cell growth. This is Transmembrane protein 184C (tmem184c) from Xenopus tropicalis (Western clawed frog).